Here is a 154-residue protein sequence, read N- to C-terminus: Protein X (154 aa).

Residues 68–117 form a mitochondrial targeting sequence region; the sequence is PCALRFTSARRMETTVNAHRNLPKVLHKRTLGLSAMSTTDLEAHFKDCVF.

The protein belongs to the orthohepadnavirus protein X family. In terms of assembly, may form homodimer. May interact with host CEBPA, CFLAR, CREB1, DDB1, E4F1, HBXIP, HSPD1/HSP60, NFKBIA, POLR2E and SMAD4. Interacts with host SMC5-SMC6 complex and induces its degradation. Interacts with host TRPC4AP; leading to prevent ubiquitination of TRPC4AP. Interacts with host PLSCR1; this interaction promotes ubiquitination and degradation of HBx and impairs HBx-mediated cell proliferation. A fraction may be phosphorylated in insect cells and HepG2 cells, a human hepatoblastoma cell line. Phosphorylated in vitro by host protein kinase C or mitogen-activated protein kinase. N-acetylated in insect cells.

The protein resides in the host cytoplasm. It is found in the host nucleus. Its subcellular location is the host mitochondrion. In terms of biological role, multifunctional protein that plays a role in silencing host antiviral defenses and promoting viral transcription. Does not seem to be essential for HBV infection. May be directly involved in development of cirrhosis and liver cancer (hepatocellular carcinoma). Most of cytosolic activities involve modulation of cytosolic calcium. The effect on apoptosis is controversial depending on the cell types in which the studies have been conducted. May induce apoptosis by localizing in mitochondria and causing loss of mitochondrial membrane potential. May also modulate apoptosis by binding host CFLAR, a key regulator of the death-inducing signaling complex (DISC). Promotes viral transcription by using the host E3 ubiquitin ligase DDB1 to target the SMC5-SMC6 complex to proteasomal degradation. This host complex would otherwise bind to viral episomal DNA, and prevents its transcription. Moderately stimulates transcription of many different viral and cellular transcription elements. Promoters and enhancers stimulated by HBx contain DNA binding sites for NF-kappa-B, AP-1, AP-2, c-EBP, ATF/CREB, or the calcium-activated factor NF-AT. The protein is Protein X of Hepatitis B virus genotype B2 (isolate Indonesia/pIDW420/1988) (HBV-B).